Reading from the N-terminus, the 341-residue chain is Anthranilate phosphoribosyltransferase (341 aa).

Residues Gly-82, 85–86, Thr-90, 92–95, 110–118, and Ser-122 contribute to the 5-phospho-alpha-D-ribose 1-diphosphate site; these read GD, NIST, and KHGGRSVSS. Gly-82 contacts anthranilate. Ser-94 is a binding site for Mg(2+). Anthranilate is bound at residue Arg-168. Asp-227 and Glu-228 together coordinate Mg(2+).

Belongs to the anthranilate phosphoribosyltransferase family. Homodimer. The cofactor is Mg(2+).

The enzyme catalyses N-(5-phospho-beta-D-ribosyl)anthranilate + diphosphate = 5-phospho-alpha-D-ribose 1-diphosphate + anthranilate. The protein operates within amino-acid biosynthesis; L-tryptophan biosynthesis; L-tryptophan from chorismate: step 2/5. In terms of biological role, catalyzes the transfer of the phosphoribosyl group of 5-phosphorylribose-1-pyrophosphate (PRPP) to anthranilate to yield N-(5'-phosphoribosyl)-anthranilate (PRA). In Nitrosomonas eutropha (strain DSM 101675 / C91 / Nm57), this protein is Anthranilate phosphoribosyltransferase.